We begin with the raw amino-acid sequence, 541 residues long: Light-independent protochlorophyllide reductase subunit B (541 aa).

Asp-36 contacts [4Fe-4S] cluster. Asp-286 (proton donor) is an active-site residue. A substrate-binding site is contributed by Gly-421–Met-422.

It belongs to the ChlB/BchB/BchZ family. As to quaternary structure, protochlorophyllide reductase is composed of three subunits; BchL, BchN and BchB. Forms a heterotetramer of two BchB and two BchN subunits. The cofactor is [4Fe-4S] cluster.

The enzyme catalyses chlorophyllide a + oxidized 2[4Fe-4S]-[ferredoxin] + 2 ADP + 2 phosphate = protochlorophyllide a + reduced 2[4Fe-4S]-[ferredoxin] + 2 ATP + 2 H2O. It functions in the pathway porphyrin-containing compound metabolism; bacteriochlorophyll biosynthesis (light-independent). In terms of biological role, component of the dark-operative protochlorophyllide reductase (DPOR) that uses Mg-ATP and reduced ferredoxin to reduce ring D of protochlorophyllide (Pchlide) to form chlorophyllide a (Chlide). This reaction is light-independent. The NB-protein (BchN-BchB) is the catalytic component of the complex. In Chloroflexus aurantiacus (strain ATCC 29364 / DSM 637 / Y-400-fl), this protein is Light-independent protochlorophyllide reductase subunit B.